The chain runs to 366 residues: Putative RING-H2 finger protein ATL21C (366 aa).

The N-terminal stretch at 1 to 23 is a signal peptide; sequence MTFSKQLFPFVFFLLFLVSLRHA. Residues 243-263 form a helical membrane-spanning segment; the sequence is LVLVISLSAVTVFVFPTCIAI. An RING-type; atypical zinc finger spans residues 320-362; the sequence is CPICLSEYASKETVRFIPECDHCFHVECIDVWLKIHGSCPLCR.

Belongs to the RING-type zinc finger family. ATL subfamily.

It localises to the membrane. It carries out the reaction S-ubiquitinyl-[E2 ubiquitin-conjugating enzyme]-L-cysteine + [acceptor protein]-L-lysine = [E2 ubiquitin-conjugating enzyme]-L-cysteine + N(6)-ubiquitinyl-[acceptor protein]-L-lysine.. Its pathway is protein modification; protein ubiquitination. This is Putative RING-H2 finger protein ATL21C (ATL21C) from Arabidopsis thaliana (Mouse-ear cress).